The sequence spans 258 residues: Regulatory protein RecX (258 aa).

This sequence belongs to the RecX family.

Its subcellular location is the cytoplasm. Functionally, modulates RecA activity. This Streptococcus pyogenes serotype M12 (strain MGAS2096) protein is Regulatory protein RecX.